Consider the following 780-residue polypeptide: Cullin-5 (780 aa).

Serine 34 is modified (phosphoserine). Threonine 210 carries the post-translational modification Phosphothreonine. The Cullin neddylation domain occupies 711-772 (RILRTQEAII…HKYIRRDESD (62 aa)). Lysine 724 participates in a covalent cross-link: Glycyl lysine isopeptide (Lys-Gly) (interchain with G-Cter in NEDD8).

This sequence belongs to the cullin family. Component of multiple cullin-5-RING E3 ubiquitin-protein ligase complexes (ECS complexes, also named CRL5 complexes) formed of CUL5, Elongin BC (ELOB and ELOC), RNF7/RBX2 and a variable SOCS box domain-containing protein as substrate-specific recognition component. CUL5-containing ECS complexes specifically contain RNF7/RBX2, and not RBX1, as catalytic subunit. Component of the ECS(ASB2) complex with the substrate recognition component ASB2. Component of the ECS(ASB6) complex with the substrate recognition component ASB6. Component of the ECS(ASB7) complex with the substrate recognition component ASB7. Component of the ECS(ASB9) complex with the substrate recognition component ASB9. Component of the ECS(ASB11) complex with the substrate recognition component ASB11. Component of the ECS(ASB12) complex with the substrate recognition component ASB12. Component of the ECS(LRRC41) complex with the substrate recognition component LRRC41. Component of the ECS(SOCS1) complex with the substrate recognition component SOCS1. Component of the ECS(SOCS2) complex with the substrate recognition component SOCS2. Component of the ECS(WSB1) complex with the substrate recognition subunit WSB1. Component of the ECS(SOCS3) complex with the substrate recognition component SOCS3. Component of the ECS(SOCS7) complex with the substrate recognition component SOCS7. Component of the ECS(SPSB1) complex with the substrate recognition component SPSB1. Component of the ECS(SPSB3) complex with the substrate recognition component SPSB3. Component of the ECS(SPSB2) complex with the substrate recognition component SPSB2. Component of the ECS(SPSB4) complex with the substrate recognition component SPSB4. Component of the ECS(RAB40) complex with the substrate recognition subunit RAB40A, RAB40B or RAB40C. Component of the ECS(KLHDC1) complex with the substrate recognition component KLHDC1. Component of the ECS(PCMTD1) complex with the substrate recognition subunit PCMTD1. May also form complexes containing RBX1 and ELOA or VHL; additional evidence is however required to confirm this result in vivo. Interacts (when neddylated) with ARIH2; leading to activate the E3 ligase activity of ARIH2. Interacts with ERCC6; the interaction is induced by DNA damaging agents or inhibitors of RNA polymerase II elongation. Interacts with ELOA (via the BC-box). Interacts (unneddylated form) with DCUN1D1, DCUN1D2, DCUN1D3, DCUN1D4 and DCUN1D5; these interactions promote the cullin neddylation. Post-translationally, neddylated; which enhances the ubiquitination activity of ECS complexes and prevents binding of the inhibitor CAND1. Deneddylated via its interaction with the COP9 signalosome (CSN).

It is found in the nucleus. It functions in the pathway protein modification; protein ubiquitination. Its function is as follows. Core component of multiple cullin-5-RING E3 ubiquitin-protein ligase complexes (ECS complexes, also named CRL5 complexes), which mediate the ubiquitination and subsequent proteasomal degradation of target proteins. Acts a scaffold protein that contributes to catalysis through positioning of the substrate and the ubiquitin-conjugating enzyme. The functional specificity of the E3 ubiquitin-protein ligase complex depends on the variable SOCS box-containing substrate recognition component. Acts as a key regulator of neuron positioning during cortex development: component of various SOCS-containing ECS complexes, such as the ECS(SOCS7) complex, that regulate reelin signaling by mediating ubiquitination and degradation of DAB1. ECS(SOCS1) seems to direct ubiquitination of JAK2. The ECS(SOCS2) complex mediates the ubiquitination and subsequent proteasomal degradation of phosphorylated EPOR and GHR. The ECS(SPSB3) complex catalyzes ubiquitination of nuclear CGAS. ECS(KLHDC1) complex is part of the DesCEND (destruction via C-end degrons) pathway and mediates ubiquitination and degradation of truncated SELENOS selenoprotein produced by failed UGA/Sec decoding, which ends with a glycine. The ECS(ASB9) complex mediates ubiquitination and degradation of CKB. As part of some ECS complex, promotes 'Lys-11'-linked ubiquitination and degradation of BTRC. As part of a multisubunit ECS complex, polyubiquitinates monoubiquitinated POLR2A. As part of the ECS(RAB40C) complex, mediates ANKRD28 ubiquitination and degradation, thereby regulating protein phosphatase 6 (PP6) complex activity and focal adhesion assembly during cell migration. As part of the ECS(RAB40A) complex, mediates RHOU 'Lys-48'-linked ubiquitination and degradation, thus inhibiting focal adhesion disassembly during cell migration. As part of the ECS(RAB40B) complex, mediates LIMA1/EPLIN and RAP2 ubiquitination, thereby regulating actin cytoskeleton dynamics and stress fiber formation during cell migration. May form a cell surface vasopressin receptor. The sequence is that of Cullin-5 from Pongo abelii (Sumatran orangutan).